A 175-amino-acid chain; its full sequence is Calcineurin subunit B (175 aa).

EF-hand domains follow at residues 21 to 56, 60 to 88, 90 to 125, and 131 to 166; these read PELMRLKKRFMKLDKDGSGSIDKDEFLQIPQIANNP, RMIAIFDEDGSGTVDFQEFVGGLSAFSSK, GRDEKLRFAFKVYDMDRDGYISNGELYLVLKQMVGN, and QLQQIVDKTIMEADKDGDGKLSFEEFTQMVASTDIV. D34, D36, S38, S40, E45, D66, D68, S70, T72, E77, D103, D105, D107, Y109, E114, D144, D146, D148, K150, and E155 together coordinate Ca(2+).

Belongs to the calcineurin regulatory subunit family. Composed of a catalytic subunit (A) and a regulatory subunit (B).

Its function is as follows. Regulatory subunit of calcineurin, a calcium-dependent, calmodulin stimulated protein phosphatase. Confers calcium sensitivity. Plays a central role in virulence and antifungal drug action. This chain is Calcineurin subunit B (CNB1), found in Cryptococcus neoformans var. neoformans serotype D (strain B-3501A) (Filobasidiella neoformans).